A 90-amino-acid polypeptide reads, in one-letter code: Small ribosomal subunit protein uS17 (90 aa).

The protein belongs to the universal ribosomal protein uS17 family. Part of the 30S ribosomal subunit.

In terms of biological role, one of the primary rRNA binding proteins, it binds specifically to the 5'-end of 16S ribosomal RNA. This is Small ribosomal subunit protein uS17 from Paraburkholderia phymatum (strain DSM 17167 / CIP 108236 / LMG 21445 / STM815) (Burkholderia phymatum).